The following is a 117-amino-acid chain: MALETVPKDLRHLRACLLCSLVKTIDQFEYDGCDNCDAYLQMKGNREMVYDCTSSSFDGIIAMMSPGDSWVSKWQRVSNFKPGVYAVSVTGRLPQGIVRELKSRGVAYKSRDTAIKT.

Ala2 is subject to N-acetylalanine. The tract at residues 2 to 40 is interaction with SUPT5H; it reads ALETVPKDLRHLRACLLCSLVKTIDQFEYDGCDNCDAYL. Zn(2+)-binding residues include Cys16, Cys19, Cys33, and Cys36. A C4-type zinc finger spans residues 16-36; the sequence is CLLCSLVKTIDQFEYDGCDNC.

Belongs to the SPT4 family. Interacts with SUPT5H to form DSIF. DSIF interacts with the positive transcription elongation factor b complex (P-TEFb complex), which is composed of CDK9 and cyclin-T (CCNT1 or CCNT2). DSIF interacts with RNA polymerase II, and this interaction is reduced by phosphorylation of the C-terminal domain (CTD) of POLR2A by P-TEFb. DSIF also interacts with the NELF complex, which is composed of NELFA, NELFB, NELFD and NELFE, and this interaction occurs following prior binding of DSIF to RNA polymerase II. DSIF also interacts with PRMT1/HRMT1L2, TATSF1, RNGTT/CAP1A, PRMT5/SKB1, SUPT6H, and can interact with PIN1. Post-translationally, ubiquitinated by UBR5 when not assembled in the DSIF complex, leading to its degradation: UBR5 recognizes and binds a degron that is not accessible when SUPT4H1 is part of the DSIF complex.

It is found in the nucleus. Its function is as follows. Component of the DRB sensitivity-inducing factor complex (DSIF complex), which regulates mRNA processing and transcription elongation by RNA polymerase II. DSIF positively regulates mRNA capping by stimulating the mRNA guanylyltransferase activity of RNGTT/CAP1A. DSIF also acts cooperatively with the negative elongation factor complex (NELF complex) to enhance transcriptional pausing at sites proximal to the promoter. Transcriptional pausing may facilitate the assembly of an elongation competent RNA polymerase II complex. DSIF and NELF promote pausing by inhibition of the transcription elongation factor TFIIS/S-II. TFIIS/S-II binds to RNA polymerase II at transcription pause sites and stimulates the weak intrinsic nuclease activity of the enzyme. Cleavage of blocked transcripts by RNA polymerase II promotes the resumption of transcription from the new 3' terminus and may allow repeated attempts at transcription through natural pause sites. This is Transcription elongation factor SPT4 (SUPT4H1) from Pongo abelii (Sumatran orangutan).